The primary structure comprises 328 residues: Carbonic anhydrase, chloroplastic (328 aa).

Residues 1–15 show a composition bias toward low complexity; the sequence is MSTSSINGFSLSSLS. Residues 1-26 are disordered; it reads MSTSSINGFSLSSLSPAKTSTKRTTL. Residues 1–70 constitute a chloroplast transit peptide; it reads MSTSSINGFS…IITPVLREEM (70 aa).

This sequence belongs to the beta-class carbonic anhydrase family. As to quaternary structure, homohexamer.

It localises to the plastid. It is found in the chloroplast stroma. The enzyme catalyses hydrogencarbonate + H(+) = CO2 + H2O. Reversible hydration of carbon dioxide. The polypeptide is Carbonic anhydrase, chloroplastic (Pisum sativum (Garden pea)).